The chain runs to 363 residues: Ribosomal RNA large subunit methyltransferase M (363 aa).

Residues S187, 220–223, D239, D259, and D276 each bind S-adenosyl-L-methionine; that span reads CPGG. K305 functions as the Proton acceptor in the catalytic mechanism.

This sequence belongs to the class I-like SAM-binding methyltransferase superfamily. RNA methyltransferase RlmE family. RlmM subfamily. Monomer.

The protein resides in the cytoplasm. It catalyses the reaction cytidine(2498) in 23S rRNA + S-adenosyl-L-methionine = 2'-O-methylcytidine(2498) in 23S rRNA + S-adenosyl-L-homocysteine + H(+). Catalyzes the 2'-O-methylation at nucleotide C2498 in 23S rRNA. This Shewanella loihica (strain ATCC BAA-1088 / PV-4) protein is Ribosomal RNA large subunit methyltransferase M.